The primary structure comprises 385 residues: Putative actin-25 (385 aa).

The protein belongs to the actin family.

Its subcellular location is the cytoplasm. It is found in the cytoskeleton. It catalyses the reaction ATP + H2O = ADP + phosphate + H(+). In terms of biological role, actins are highly conserved proteins that are involved in various types of cell motility and are ubiquitously expressed in all eukaryotic cells. Multiple isoforms are involved in various cellular functions such as cytoskeleton structure, cell mobility, chromosome movement and muscle contraction. The polypeptide is Putative actin-25 (act25) (Dictyostelium discoideum (Social amoeba)).